The following is a 356-amino-acid chain: uncharacterized protein (356 aa).

37–44 (TGASSGIG) contributes to the NADP(+) binding site. Serine 168 lines the substrate pocket. The active-site Proton acceptor is the tyrosine 181.

Belongs to the short-chain dehydrogenases/reductases (SDR) family.

This is an uncharacterized protein from Bacillus subtilis (strain 168).